The primary structure comprises 276 residues: uncharacterized protein (276 aa).

To E.coli YjfZ.

This is an uncharacterized protein from Escherichia coli (strain K12).